A 168-amino-acid chain; its full sequence is Alpha-amylase/trypsin inhibitor CM3 (168 aa).

The signal sequence occupies residues 1–25; the sequence is MACKSSCSLLLLAAVLLSVLAAASA.

This sequence belongs to the protease inhibitor I6 (cereal trypsin/alpha-amylase inhibitor) family. Subunit of the tetrameric inhibitor. Five disulfide bonds, which are essential for the inhibitor activity, are probably present. Developing endosperm.

The protein localises to the secreted. Its function is as follows. Alpha-amylase/trypsin inhibitor. It could be involved in insect defense mechanisms. The sequence is that of Alpha-amylase/trypsin inhibitor CM3 from Triticum aestivum (Wheat).